Here is an 874-residue protein sequence, read N- to C-terminus: Leucine--tRNA ligase (874 aa).

A 'HIGH' region motif is present at residues Pro43–His53. The tract at residues Leu614–Asn634 is disordered. A 'KMSKS' region motif is present at residues Lys627–Ser631. Lys630 lines the ATP pocket.

It belongs to the class-I aminoacyl-tRNA synthetase family.

It localises to the cytoplasm. It catalyses the reaction tRNA(Leu) + L-leucine + ATP = L-leucyl-tRNA(Leu) + AMP + diphosphate. The sequence is that of Leucine--tRNA ligase from Azorhizobium caulinodans (strain ATCC 43989 / DSM 5975 / JCM 20966 / LMG 6465 / NBRC 14845 / NCIMB 13405 / ORS 571).